Consider the following 406-residue polypeptide: Imidazolonepropionase (406 aa).

Residues His-72 and His-74 each coordinate Fe(3+). Zn(2+)-binding residues include His-72 and His-74. 4-imidazolone-5-propanoate contacts are provided by Arg-81, Tyr-144, and His-177. Residue Tyr-144 participates in N-formimidoyl-L-glutamate binding. His-242 lines the Fe(3+) pocket. His-242 contributes to the Zn(2+) binding site. Gln-245 contacts 4-imidazolone-5-propanoate. Fe(3+) is bound at residue Asp-317. A Zn(2+)-binding site is contributed by Asp-317. Asn-319 and Gly-321 together coordinate N-formimidoyl-L-glutamate. Thr-322 is a binding site for 4-imidazolone-5-propanoate.

It belongs to the metallo-dependent hydrolases superfamily. HutI family. Zn(2+) serves as cofactor. Requires Fe(3+) as cofactor.

The protein resides in the cytoplasm. The catalysed reaction is 4-imidazolone-5-propanoate + H2O = N-formimidoyl-L-glutamate. It participates in amino-acid degradation; L-histidine degradation into L-glutamate; N-formimidoyl-L-glutamate from L-histidine: step 3/3. In terms of biological role, catalyzes the hydrolytic cleavage of the carbon-nitrogen bond in imidazolone-5-propanoate to yield N-formimidoyl-L-glutamate. It is the third step in the universal histidine degradation pathway. The polypeptide is Imidazolonepropionase (Yersinia enterocolitica serotype O:8 / biotype 1B (strain NCTC 13174 / 8081)).